The following is a 611-amino-acid chain: 4-hydroxy-3-methylbut-2-en-1-yl diphosphate synthase (flavodoxin) (611 aa).

Residues cysteine 520, cysteine 523, cysteine 554, and glutamate 561 each coordinate [4Fe-4S] cluster.

This sequence belongs to the IspG family. [4Fe-4S] cluster is required as a cofactor.

The catalysed reaction is (2E)-4-hydroxy-3-methylbut-2-enyl diphosphate + oxidized [flavodoxin] + H2O + 2 H(+) = 2-C-methyl-D-erythritol 2,4-cyclic diphosphate + reduced [flavodoxin]. Its pathway is isoprenoid biosynthesis; isopentenyl diphosphate biosynthesis via DXP pathway; isopentenyl diphosphate from 1-deoxy-D-xylulose 5-phosphate: step 5/6. Converts 2C-methyl-D-erythritol 2,4-cyclodiphosphate (ME-2,4cPP) into 1-hydroxy-2-methyl-2-(E)-butenyl 4-diphosphate. This is 4-hydroxy-3-methylbut-2-en-1-yl diphosphate synthase (flavodoxin) from Parabacteroides distasonis (strain ATCC 8503 / DSM 20701 / CIP 104284 / JCM 5825 / NCTC 11152).